The sequence spans 182 residues: Adenine phosphoribosyltransferase (182 aa).

It belongs to the purine/pyrimidine phosphoribosyltransferase family. Homodimer.

The protein resides in the cytoplasm. The catalysed reaction is AMP + diphosphate = 5-phospho-alpha-D-ribose 1-diphosphate + adenine. It functions in the pathway purine metabolism; AMP biosynthesis via salvage pathway; AMP from adenine: step 1/1. Functionally, catalyzes a salvage reaction resulting in the formation of AMP, that is energically less costly than de novo synthesis. In Streptomyces avermitilis (strain ATCC 31267 / DSM 46492 / JCM 5070 / NBRC 14893 / NCIMB 12804 / NRRL 8165 / MA-4680), this protein is Adenine phosphoribosyltransferase.